A 348-amino-acid polypeptide reads, in one-letter code: Phospho-2-dehydro-3-deoxyheptonate aldolase, Trp-sensitive (348 aa).

This sequence belongs to the class-I DAHP synthase family.

The catalysed reaction is D-erythrose 4-phosphate + phosphoenolpyruvate + H2O = 7-phospho-2-dehydro-3-deoxy-D-arabino-heptonate + phosphate. Its pathway is metabolic intermediate biosynthesis; chorismate biosynthesis; chorismate from D-erythrose 4-phosphate and phosphoenolpyruvate: step 1/7. In terms of biological role, stereospecific condensation of phosphoenolpyruvate (PEP) and D-erythrose-4-phosphate (E4P) giving rise to 3-deoxy-D-arabino-heptulosonate-7-phosphate (DAHP). The protein is Phospho-2-dehydro-3-deoxyheptonate aldolase, Trp-sensitive (aroH) of Salmonella typhimurium (strain LT2 / SGSC1412 / ATCC 700720).